We begin with the raw amino-acid sequence, 324 residues long: CIMIP2 protein GA14893 (324 aa).

This sequence belongs to the CIMIP2 family.

Its subcellular location is the cytoplasm. The protein resides in the cytoskeleton. The protein localises to the cilium axoneme. In terms of biological role, probable microtubule inner protein (MIP) part of the dynein-decorated doublet microtubules (DMTs) in cilium axoneme. The protein is CIMIP2 protein GA14893 of Drosophila pseudoobscura pseudoobscura (Fruit fly).